Here is a 320-residue protein sequence, read N- to C-terminus: Zinc finger Ran-binding domain-containing protein 2 (320 aa).

Position 9 is a phosphoserine (S9). The RanBP2-type 1 zinc-finger motif lies at 9-40 (SDGDWICPDKKCGNVNFARRTSCNRCGREKTT). K18, K54, and K92 each carry N6-acetyllysine. The segment at 65–94 (SANDWQCKTCSNVNWARRSECNMCNTPKYA) adopts a RanBP2-type 2 zinc-finger fold. Residues 117–320 (REESDGEYDE…QVIGENTKQP (204 aa)) form a disordered region. Phosphoserine occurs at positions 120, 153, 181, 188, and 193. The span at 150-163 (DKESEGEEEDEDED) shows a compositional bias: acidic residues. The tract at residues 151–320 (KESEGEEEDE…QVIGENTKQP (170 aa)) is required for nuclear targeting. Over residues 196–210 (KKSNRRSRSKSRSSH) the composition is skewed to basic residues. 2 stretches are compositionally biased toward low complexity: residues 211-224 (SRSS…SSSR) and 232-242 (RSSSSSQSRSR). Residues 251-273 (SRGSKSRSSSRSHRGSSSPRKRS) are compositionally biased toward basic residues.

This sequence belongs to the ZRANB2 family. In terms of assembly, interacts with the C-terminal half of SNRP70/U1-70K, the Arg/Ser-rich domain of AKAP17A as well as with U2AF1 and CLK1. Phosphorylated on Ser-310 upon DNA damage, probably by ATM or ATR.

Its subcellular location is the nucleus. Functionally, splice factor required for alternative splicing of TRA2B/SFRS10 transcripts. Binds to ssRNA containing the consensus sequence 5'-AGGUAA-3'. May interfere with constitutive 5'-splice site selection. This is Zinc finger Ran-binding domain-containing protein 2 from Pongo abelii (Sumatran orangutan).